The chain runs to 323 residues: MMPMFEPATPLERKRYYREEWNVRDLPDFIADNLHMREFGFDHNGRGPSDRYRVFRDERSLARFMRVRYPFAAYSSVAFYREPWKRKGWQRSELIFDVDAKDLPVRSCECDGVCPTCLDEARELVLMMVDTLKGDLGLGDIHVIYSGRGYHVRVLDPEVMELGSEVRAEILRYTAGAREPRRKFTDGVSSYEMEHFSIPLGYHRVFTERARHVLLHLRGDEDIEDVTARTVKTAVRNRNLILEDRWGEFRSVIGPRVYPRLVKGISKINMRMLDAKVTIDLKRILRLPTSLHSKVSMICMEVKNPETFDPLKSAVPRFVDERE.

Active-site residues include Asp97, Asp99, and Asp274.

Belongs to the eukaryotic-type primase small subunit family. In terms of assembly, heterodimer of a small subunit (PriS) and a large subunit (PriL). Requires Mg(2+) as cofactor. The cofactor is Mn(2+).

In terms of biological role, catalytic subunit of DNA primase, an RNA polymerase that catalyzes the synthesis of short RNA molecules used as primers for DNA polymerase during DNA replication. The small subunit contains the primase catalytic core and has DNA synthesis activity on its own. Binding to the large subunit stabilizes and modulates the activity, increasing the rate of DNA synthesis while decreasing the length of the DNA fragments, and conferring RNA synthesis capability. The DNA polymerase activity may enable DNA primase to also catalyze primer extension after primer synthesis. May also play a role in DNA repair. This chain is DNA primase small subunit PriS, found in Methanothermobacter thermautotrophicus (strain ATCC 29096 / DSM 1053 / JCM 10044 / NBRC 100330 / Delta H) (Methanobacterium thermoautotrophicum).